Consider the following 201-residue polypeptide: Peptidyl-tRNA hydrolase (201 aa).

Position 14 (Tyr-14) interacts with tRNA. His-19 functions as the Proton acceptor in the catalytic mechanism. Phe-64, Asn-66, and Asn-112 together coordinate tRNA.

This sequence belongs to the PTH family. In terms of assembly, monomer.

Its subcellular location is the cytoplasm. It carries out the reaction an N-acyl-L-alpha-aminoacyl-tRNA + H2O = an N-acyl-L-amino acid + a tRNA + H(+). Hydrolyzes ribosome-free peptidyl-tRNAs (with 1 or more amino acids incorporated), which drop off the ribosome during protein synthesis, or as a result of ribosome stalling. Its function is as follows. Catalyzes the release of premature peptidyl moieties from peptidyl-tRNA molecules trapped in stalled 50S ribosomal subunits, and thus maintains levels of free tRNAs and 50S ribosomes. The chain is Peptidyl-tRNA hydrolase from Rhodopseudomonas palustris (strain BisA53).